A 446-amino-acid chain; its full sequence is Probable glycine dehydrogenase (decarboxylating) subunit 1 (446 aa).

Belongs to the GcvP family. N-terminal subunit subfamily. As to quaternary structure, the glycine cleavage system is composed of four proteins: P, T, L and H. In this organism, the P 'protein' is a heterodimer of two subunits.

It catalyses the reaction N(6)-[(R)-lipoyl]-L-lysyl-[glycine-cleavage complex H protein] + glycine + H(+) = N(6)-[(R)-S(8)-aminomethyldihydrolipoyl]-L-lysyl-[glycine-cleavage complex H protein] + CO2. Its function is as follows. The glycine cleavage system catalyzes the degradation of glycine. The P protein binds the alpha-amino group of glycine through its pyridoxal phosphate cofactor; CO(2) is released and the remaining methylamine moiety is then transferred to the lipoamide cofactor of the H protein. This chain is Probable glycine dehydrogenase (decarboxylating) subunit 1, found in Protochlamydia amoebophila (strain UWE25).